The sequence spans 278 residues: Putative cuticle collagen 91 (278 aa).

Disordered regions lie at residues 84–109 and 140–278; these read LAKNCPPGPPGPPGAPGAAGEPGVDG and GPAG…SVRQ. The segment covering 89–98 has biased composition (pro residues); that stretch reads PPGPPGPPGA. Triple-helical region stretches follow at residues 91–120, 137–199, and 202–264; these read GPPGPPGAPGAAGEPGVDGDAGAAGIDGVA, GEAG…NGQR, and GTPG…PGPD. The segment covering 99-109 has biased composition (low complexity); that stretch reads PGAAGEPGVDG. Residues 158-167 are compositionally biased toward gly residues; the sequence is GADGQGGAPG. 2 stretches are compositionally biased toward low complexity: residues 172 to 228 and 236 to 245; these read EGPA…AGAP and APGVDGQPGA.

This sequence belongs to the cuticular collagen family. Collagen polypeptide chains are complexed within the cuticle by disulfide bonds and other types of covalent cross-links.

Nematode cuticles are composed largely of collagen-like proteins. The cuticle functions both as an exoskeleton and as a barrier to protect the worm from its environment. In Caenorhabditis elegans, this protein is Putative cuticle collagen 91 (col-91).